The sequence spans 873 residues: Protein SEY1 (873 aa).

Positions 1–20 (MVANGHFAGSADGQHSSSYE) are disordered. Residues 1-749 (MVANGHFAGS…KRSAIGGITQ (749 aa)) are Cytoplasmic-facing. The 259-residue stretch at 49–307 (GFNYHLISVF…IPADGFAVYA (259 aa)) folds into the GB1/RHD3-type G domain. 59–66 (GSQSTGKS) provides a ligand contact to GTP. Residues 482 to 506 (SNYQQELSLYQKDLERTSGQLRRDE) are a coiled coil. The disordered stretch occupies residues 677 to 703 (DKWIGHTPSSATPADEEDLTPIGGVDD). A compositionally biased stretch (acidic residues) spans 690–703 (ADEEDLTPIGGVDD). The chain crosses the membrane as a helical span at residues 750 to 770 (VPLYFYGLLFALGWNEILAVL). The Lumenal portion of the chain corresponds to 771–773 (RNP). Residues 774–794 (VYFLLLFVCAIGAYITYQLNL) traverse the membrane as a helical segment. Topologically, residues 795-873 (WGPIIKMTEA…EDVDDDDDDF (79 aa)) are cytoplasmic. Residues 828-873 (RQAMAMSGARNATEEHEMSRLSRKPAERGGRKNRADEDVDDDDDDF) are disordered. Over residues 839–863 (ATEEHEMSRLSRKPAERGGRKNRAD) the composition is skewed to basic and acidic residues. The segment covering 864 to 873 (EDVDDDDDDF) has biased composition (acidic residues).

This sequence belongs to the TRAFAC class dynamin-like GTPase superfamily. GB1/RHD3 GTPase family. RHD3 subfamily.

It localises to the endoplasmic reticulum membrane. Functionally, cooperates with the reticulon proteins and tubule-shaping DP1 family proteins to generate and maintain the structure of the tubular endoplasmic reticulum network. Has GTPase activity, which is required for its function in ER organization. This chain is Protein SEY1, found in Ajellomyces capsulatus (strain NAm1 / WU24) (Darling's disease fungus).